The sequence spans 289 residues: ATP phosphoribosyltransferase (289 aa).

Belongs to the ATP phosphoribosyltransferase family. Long subfamily. Requires Mg(2+) as cofactor.

It is found in the cytoplasm. It carries out the reaction 1-(5-phospho-beta-D-ribosyl)-ATP + diphosphate = 5-phospho-alpha-D-ribose 1-diphosphate + ATP. It functions in the pathway amino-acid biosynthesis; L-histidine biosynthesis; L-histidine from 5-phospho-alpha-D-ribose 1-diphosphate: step 1/9. Its activity is regulated as follows. Feedback inhibited by histidine. Functionally, catalyzes the condensation of ATP and 5-phosphoribose 1-diphosphate to form N'-(5'-phosphoribosyl)-ATP (PR-ATP). Has a crucial role in the pathway because the rate of histidine biosynthesis seems to be controlled primarily by regulation of HisG enzymatic activity. The chain is ATP phosphoribosyltransferase from Methanosarcina mazei (strain ATCC BAA-159 / DSM 3647 / Goe1 / Go1 / JCM 11833 / OCM 88) (Methanosarcina frisia).